The primary structure comprises 179 residues: ATP synthase subunit delta (179 aa).

The protein belongs to the ATPase delta chain family. F-type ATPases have 2 components, F(1) - the catalytic core - and F(0) - the membrane proton channel. F(1) has five subunits: alpha(3), beta(3), gamma(1), delta(1), epsilon(1). F(0) has three main subunits: a(1), b(2) and c(10-14). The alpha and beta chains form an alternating ring which encloses part of the gamma chain. F(1) is attached to F(0) by a central stalk formed by the gamma and epsilon chains, while a peripheral stalk is formed by the delta and b chains.

Its subcellular location is the cell membrane. In terms of biological role, f(1)F(0) ATP synthase produces ATP from ADP in the presence of a proton or sodium gradient. F-type ATPases consist of two structural domains, F(1) containing the extramembraneous catalytic core and F(0) containing the membrane proton channel, linked together by a central stalk and a peripheral stalk. During catalysis, ATP synthesis in the catalytic domain of F(1) is coupled via a rotary mechanism of the central stalk subunits to proton translocation. Its function is as follows. This protein is part of the stalk that links CF(0) to CF(1). It either transmits conformational changes from CF(0) to CF(1) or is implicated in proton conduction. In Clostridium botulinum (strain Okra / Type B1), this protein is ATP synthase subunit delta.